A 919-amino-acid polypeptide reads, in one-letter code: UPF0182 protein SUN_1015 (919 aa).

The next 7 helical transmembrane spans lie at 8–28, 51–71, 102–122, 158–178, 207–227, 246–266, and 274–294; these read IIIT…VDYY, ILSF…HIHF, AVAW…GSYA, VYQF…IGVL, LTAF…YNIL, IPAY…LFFY, and VIVS…WIYP.

It belongs to the UPF0182 family.

It is found in the cell membrane. The protein is UPF0182 protein SUN_1015 of Sulfurovum sp. (strain NBC37-1).